The chain runs to 507 residues: Light-independent protochlorophyllide reductase subunit B (507 aa).

[4Fe-4S] cluster is bound at residue Asp-36. Asp-293 acts as the Proton donor in catalysis. 428–429 (GM) provides a ligand contact to substrate.

It belongs to the ChlB/BchB/BchZ family. As to quaternary structure, protochlorophyllide reductase is composed of three subunits; ChlL, ChlN and ChlB. Forms a heterotetramer of two ChlB and two ChlN subunits. Requires [4Fe-4S] cluster as cofactor.

Its subcellular location is the plastid. It is found in the chloroplast. The enzyme catalyses chlorophyllide a + oxidized 2[4Fe-4S]-[ferredoxin] + 2 ADP + 2 phosphate = protochlorophyllide a + reduced 2[4Fe-4S]-[ferredoxin] + 2 ATP + 2 H2O. It participates in porphyrin-containing compound metabolism; chlorophyll biosynthesis (light-independent). In terms of biological role, component of the dark-operative protochlorophyllide reductase (DPOR) that uses Mg-ATP and reduced ferredoxin to reduce ring D of protochlorophyllide (Pchlide) to form chlorophyllide a (Chlide). This reaction is light-independent. The NB-protein (ChlN-ChlB) is the catalytic component of the complex. This Porphyra purpurea (Red seaweed) protein is Light-independent protochlorophyllide reductase subunit B.